The chain runs to 170 residues: WRDLGPLPGTKLRHTLWSKGKLLVNMNTNEPLRPSDVAVGSLTFAMPEGLEEHDEDFQNEIAKAALMIIRLEPDSIKDKRELEWSHEGIVAYSKICTHVGCPISLYEQQTHHALCPCHQSTFDLADGARVIFGPAGHALPQLRIGVNDEGYLEALGDFEEPVGPAYWERG.

Residues 63-153 (KAALMIIRLE…IGVNDEGYLE (91 aa)) enclose the Rieske domain. 4 residues coordinate [2Fe-2S] cluster: C96, H98, C115, and H118. Cysteines 101 and 117 form a disulfide.

As to quaternary structure, the cytochrome bc1 complex is composed of a cytochrome b (QcrB), the Rieske iron-sulfur protein (QcrA) and a diheme cytochrome c (QcrC) subunit. [2Fe-2S] cluster is required as a cofactor.

The protein localises to the cell membrane. Functionally, iron-sulfur subunit of the cytochrome bc1 complex, an essential component of the respiratory electron transport chain required for ATP synthesis. The bc1 complex catalyzes the oxidation of menaquinol and the reduction of cytochrome c in the respiratory chain. The bc1 complex operates through a Q-cycle mechanism that couples electron transfer to generation of the proton gradient that drives ATP synthesis. The polypeptide is Cytochrome bc1 complex Rieske iron-sulfur subunit (qcrA) (Streptomyces lividans).